The primary structure comprises 1420 residues: DNA-directed RNA polymerase subunit beta'' (1420 aa).

Zn(2+)-binding residues include cysteine 220, cysteine 295, cysteine 302, and cysteine 305.

This sequence belongs to the RNA polymerase beta' chain family. RpoC2 subfamily. In terms of assembly, in plastids the minimal PEP RNA polymerase catalytic core is composed of four subunits: alpha, beta, beta', and beta''. When a (nuclear-encoded) sigma factor is associated with the core the holoenzyme is formed, which can initiate transcription. Zn(2+) is required as a cofactor.

It localises to the plastid. The protein resides in the chloroplast. The catalysed reaction is RNA(n) + a ribonucleoside 5'-triphosphate = RNA(n+1) + diphosphate. DNA-dependent RNA polymerase catalyzes the transcription of DNA into RNA using the four ribonucleoside triphosphates as substrates. The chain is DNA-directed RNA polymerase subunit beta'' from Adiantum capillus-veneris (Maidenhair fern).